The sequence spans 162 residues: Catabolic 3-dehydroquinase (162 aa).

Tyrosine 24 serves as the catalytic Proton acceptor. Asparagine 88, histidine 94, and aspartate 101 together coordinate substrate. Residue histidine 114 is the Proton donor of the active site. Substrate-binding positions include 115–116 and arginine 125; that span reads VS.

The protein belongs to the type-II 3-dehydroquinase family. Homododecamer. Adopts a ring-like structure, composed of an arrangement of two hexameric rings stacked on top of one another.

It carries out the reaction 3-dehydroquinate = 3-dehydroshikimate + H2O. It functions in the pathway aromatic compound metabolism; 3,4-dihydroxybenzoate biosynthesis; 3,4-dihydroxybenzoate from 3-dehydroquinate: step 1/2. Is involved in the catabolism of quinate. Allows the utilization of quinate as carbon source via the beta-ketoadipate pathway. The polypeptide is Catabolic 3-dehydroquinase (Podospora anserina (strain S / ATCC MYA-4624 / DSM 980 / FGSC 10383) (Pleurage anserina)).